Consider the following 485-residue polypeptide: CCA-adding enzyme (485 aa).

ATP contacts are provided by S53 and R56. CTP contacts are provided by S53 and R56. Positions 65, 67, and 124 each coordinate Mg(2+). 3 residues coordinate ATP: H146, K164, and Y173. Residues H146, K164, and Y173 each contribute to the CTP site.

It belongs to the tRNA nucleotidyltransferase/poly(A) polymerase family. Archaeal CCA-adding enzyme subfamily. In terms of assembly, homodimer. Mg(2+) serves as cofactor.

The catalysed reaction is a tRNA precursor + 2 CTP + ATP = a tRNA with a 3' CCA end + 3 diphosphate. The enzyme catalyses a tRNA with a 3' CCA end + 2 CTP + ATP = a tRNA with a 3' CCACCA end + 3 diphosphate. Its function is as follows. Catalyzes the addition and repair of the essential 3'-terminal CCA sequence in tRNAs without using a nucleic acid template. Adds these three nucleotides in the order of C, C, and A to the tRNA nucleotide-73, using CTP and ATP as substrates and producing inorganic pyrophosphate. tRNA 3'-terminal CCA addition is required both for tRNA processing and repair. Also involved in tRNA surveillance by mediating tandem CCA addition to generate a CCACCA at the 3' terminus of unstable tRNAs. While stable tRNAs receive only 3'-terminal CCA, unstable tRNAs are marked with CCACCA and rapidly degraded. The polypeptide is CCA-adding enzyme (Methanopyrus kandleri (strain AV19 / DSM 6324 / JCM 9639 / NBRC 100938)).